The sequence spans 1131 residues: Protein TOPLESS (1131 aa).

In terms of domain architecture, LisH spans 4–36 (LSRELVFLILQFLDEEKFKETVHKLEQESGFFF). Positions 34–92 (FFFNMKYFEDEVHNGNWDEVEKYLSGFTKVDDNRYSMKIFFEIRKQKYLEALDKHDRPK) constitute a CTLH domain. Phosphoserine is present on Ser-214. The segment at 286–305 (TPPTNASLDYPSADSEHVSK) is disordered. WD repeat units lie at residues 353–393 (SQGS…RLVQ), 415–454 (EPVVSVNRVIWSPDGSLFGVAYSRHIVQLYSYHGGEDMRQ), 460–501 (AHVG…KRHT), 504–545 (GHEA…SRVD), 548–591 (APGR…VKRT), 595–634 (FHKRSLGVVQFDTTKNRYLAAGDDFSIKFWDMDAVQLLTA), 639–678 (GGLQASPRIRFNKEGSLLAVSGNENVIKIMANSDGLRLLH), 710–756 (DRSA…EPSQ), 766–805 (LRVAKISRLIFTNSGNAILALASNAIHLLWKWQRNERNAT), 833–871 (NPEEAVPCFALSKNDSYVMSASGGKISLFNMMTFKTMAT), 874–914 (PPPP…VKSK), 917–956 (GHSKRITGLAFSNVLNVLVSSGADAQLCVWNTDGWEKQRS), 967–1005 (NSAPSDTRVQFHQDQAHFLVVHETQLAIYETTKLECMKQ), 1010–1049 (ESLAPITHATFSCDSQLVYASFMDATVCVFSSANLRLRCR), and 1060–1102 (LSNS…GKWG). The segment at 1100-1131 (KWGVAPPAENGSASGAPTAPSVGASASDQPQR) is disordered.

Tetramer. Homodimer. Interacts (via the LisH domain) with WUS (via the C-terminal domain). Interacts with NINJA/AFPH2. Interacts with IAA1; IAA2; IAA3; IAA4; IAA6; IAA8; IAA9; IAA11; IAA13; IAA14; IAA17; IAA18; IAA26; IAA27 and IAA28. Interacts (via the LisH domain) with IAA12/BDL (via domain I). Can form a complex with IAA12 and ARF5. Interacts with AP2 (via EAR motif) and HDA19. Interacts with TIFY5A/JAZ8 (via EAR motif). Interacts with SPEAR3/TIE1. Interacts with SPL (via EAR motif). Interacts with ZAT2 and ZAT3 (via the EAR motif). Interacts with JAZ13 (via EAR motif). Interacts with GIR1 and GIR2. As to expression, expressed in embryo and in extraembryonic tissues. Expressed in inflorescences, flowers, floral meristems, developing anthers and ovules. Detected in the vascular tissues, shoot apical meristem, cotyledons and young leaves. Expressed ubiquitously in the pistils, stamens and pollens.

It is found in the nucleus. Its function is as follows. Transcriptional corepressor. May repress the expression of root-promoting genes in the top half of the embryo to allow proper differentiation of the shoot pole during the transition stage of embryogenesis. Regulates the expression of PLT1 and PLT2. Negative regulator of jasmonate responses. Negative regulator of auxin responses. Negative regulator of multiple floral organ identity genes. Required for ovule development. The sequence is that of Protein TOPLESS (TPL) from Arabidopsis thaliana (Mouse-ear cress).